A 265-amino-acid polypeptide reads, in one-letter code: Type III pantothenate kinase (265 aa).

Position 6-13 (6-13 (DVGNTHTV)) interacts with ATP. 112-115 (GADR) serves as a coordination point for substrate. The active-site Proton acceptor is Asp114. Asp134 contacts K(+). Thr137 contributes to the ATP binding site. Thr189 is a binding site for substrate.

It belongs to the type III pantothenate kinase family. Homodimer. NH4(+) is required as a cofactor. Requires K(+) as cofactor.

It localises to the cytoplasm. The catalysed reaction is (R)-pantothenate + ATP = (R)-4'-phosphopantothenate + ADP + H(+). Its pathway is cofactor biosynthesis; coenzyme A biosynthesis; CoA from (R)-pantothenate: step 1/5. Its function is as follows. Catalyzes the phosphorylation of pantothenate (Pan), the first step in CoA biosynthesis. The sequence is that of Type III pantothenate kinase from Streptomyces coelicolor (strain ATCC BAA-471 / A3(2) / M145).